Here is a 561-residue protein sequence, read N- to C-terminus: Ribulokinase (561 aa).

Belongs to the ribulokinase family.

It carries out the reaction D-ribulose + ATP = D-ribulose 5-phosphate + ADP + H(+). It catalyses the reaction L-ribulose + ATP = L-ribulose 5-phosphate + ADP + H(+). Its pathway is carbohydrate degradation; L-arabinose degradation via L-ribulose; D-xylulose 5-phosphate from L-arabinose (bacterial route): step 2/3. This chain is Ribulokinase, found in Shouchella clausii (strain KSM-K16) (Alkalihalobacillus clausii).